Reading from the N-terminus, the 623-residue chain is uncharacterized protein (623 aa).

5 helical membrane-spanning segments follow: residues 242–262, 288–308, 318–338, 361–381, and 387–407; these read IALA…ITWL, IVSP…LDIF, VSMW…IALF, VINL…LLGV, and FNVS…ALAV.

This sequence belongs to the MscS (TC 1.A.23) family.

The protein resides in the cell membrane. This is an uncharacterized protein from Helicobacter pylori (strain J99 / ATCC 700824) (Campylobacter pylori J99).